A 7260-amino-acid chain; its full sequence is Nonribosomal peptide synthetase ecdA (7260 aa).

The 77-residue stretch at Thr-4–Gln-80 folds into the Carrier 1 domain. Ser-41 carries the O-(pantetheine 4'-phosphoryl)serine modification. The condensation 1 stretch occupies residues Glu-134–Ala-549. Residues Gln-575 to Cys-965 form an adenylation 1 region. The Carrier 2 domain occupies Ala-1090–Asn-1166. The residue at position 1127 (Ser-1127) is an O-(pantetheine 4'-phosphoryl)serine. Positions Glu-1208–Asp-1628 are condensation 2. The interval Glu-1653 to Arg-2054 is adenylation 2. A Carrier 3 domain is found at Thr-2188–Phe-2264. An O-(pantetheine 4'-phosphoryl)serine modification is found at Ser-2225. The interval Gln-2314 to Pro-2719 is condensation 3. The segment at Lys-2763–Arg-3156 is adenylation 3. In terms of domain architecture, Carrier 4 spans Gln-3287–Val-3365. Position 3324 is an O-(pantetheine 4'-phosphoryl)serine (Ser-3324). The interval Val-3417–Ile-3831 is condensation 4. An adenylation 4 region spans residues Glu-3851–Thr-4248. The Carrier 5 domain occupies Ala-4394–Ala-4471. Ser-4431 is subject to O-(pantetheine 4'-phosphoryl)serine. Positions Glu-4510–Phe-4910 are condensation 5. The segment at Glu-4955 to Arg-5357 is adenylation 5. The region spanning Ala-5496–Gly-5573 is the Carrier 6 domain. Position 5533 is an O-(pantetheine 4'-phosphoryl)serine (Ser-5533). The tract at residues Glu-5622–Ile-6043 is condensation 6. Residues Gln-6063–Arg-6460 are adenylation 6. Positions Ala-6592–Val-6668 constitute a Carrier 7 domain. Ser-6629 carries the O-(pantetheine 4'-phosphoryl)serine modification. The condensation 7 stretch occupies residues Leu-6718–Ser-7133. The disordered stretch occupies residues Cys-7241–Ile-7260.

Belongs to the NRP synthetase family.

It participates in antifungal biosynthesis. Its function is as follows. Nonribosomal peptide synthetase; part of the gene cluster that mediates the biosynthesis of echinocandin B, a fungal lipidated cyclic hexapeptide that acts as an antifungal agent. Linoleoyl-AMP, produced by the fatty-acyl-AMP ligase ecdI, is transferred to the initiation carrier domain (T0) of ecdA. The linoleoyl-S-phosphopantetheinyl-T0 is sequentially extended with L-ornithine, L-threonine, L-proline, L-homotyrosine, L-threonine, and 4R-methyl-L-proline to form the linear hexapeptide. Thereafter, the terminal condensation (C7) performs macrocyclization of the NRPS product and the cyclic scaffold is released from ecdA. All six of the amino acid residues are hydroxylated, including 4R,5R-dihydroxy-L-ornithine, 4R-hydroxyl-L-proline, 3S,4S-dihydroxy-L-homotyrosine, and 3S-hydroxyl-4S-methyl-L-prolin. In the pathway, all the hydroxylation reactions are proposed to occur following completion of the cyclic peptide, so the unhydroxylated precursor produced by ecdA will undergo six rounds of hydroxylation. Five hydroxylase genes (ecdG, ecdH, ecdK, htyE and htyF) are embedded within the echinocandin B (ecd) and L-homotyrosine (hty) clusters. The sequence is that of Nonribosomal peptide synthetase ecdA from Aspergillus rugulosus (Emericella rugulosa).